Consider the following 201-residue polypeptide: Holliday junction branch migration complex subunit RuvA (201 aa).

Residues 1-64 (MYEYIRGQFQ…EDFIGLYGFT (64 aa)) are domain I. The interval 65–143 (TREELEMFKL…PDELTSEEGE (79 aa)) is domain II. A flexible linker region spans residues 144–152 (LIEGINDNS). The domain III stretch occupies residues 153-201 (DYSFNINETLSALMALGYTEKEAQKALEKVDKTLSIENMIKESLKLLMR).

The protein belongs to the RuvA family. Homotetramer. Forms an RuvA(8)-RuvB(12)-Holliday junction (HJ) complex. HJ DNA is sandwiched between 2 RuvA tetramers; dsDNA enters through RuvA and exits via RuvB. An RuvB hexamer assembles on each DNA strand where it exits the tetramer. Each RuvB hexamer is contacted by two RuvA subunits (via domain III) on 2 adjacent RuvB subunits; this complex drives branch migration. In the full resolvosome a probable DNA-RuvA(4)-RuvB(12)-RuvC(2) complex forms which resolves the HJ.

It localises to the cytoplasm. In terms of biological role, the RuvA-RuvB-RuvC complex processes Holliday junction (HJ) DNA during genetic recombination and DNA repair, while the RuvA-RuvB complex plays an important role in the rescue of blocked DNA replication forks via replication fork reversal (RFR). RuvA specifically binds to HJ cruciform DNA, conferring on it an open structure. The RuvB hexamer acts as an ATP-dependent pump, pulling dsDNA into and through the RuvAB complex. HJ branch migration allows RuvC to scan DNA until it finds its consensus sequence, where it cleaves and resolves the cruciform DNA. The protein is Holliday junction branch migration complex subunit RuvA of Clostridium perfringens (strain ATCC 13124 / DSM 756 / JCM 1290 / NCIMB 6125 / NCTC 8237 / Type A).